Consider the following 494-residue polypeptide: Probable cytosol aminopeptidase (494 aa).

The Mn(2+) site is built by K260 and D265. The active site involves K272. Residues D283, D342, and E344 each coordinate Mn(2+). R346 is a catalytic residue.

It belongs to the peptidase M17 family. Mn(2+) is required as a cofactor.

The protein resides in the cytoplasm. The enzyme catalyses Release of an N-terminal amino acid, Xaa-|-Yaa-, in which Xaa is preferably Leu, but may be other amino acids including Pro although not Arg or Lys, and Yaa may be Pro. Amino acid amides and methyl esters are also readily hydrolyzed, but rates on arylamides are exceedingly low.. It carries out the reaction Release of an N-terminal amino acid, preferentially leucine, but not glutamic or aspartic acids.. Functionally, presumably involved in the processing and regular turnover of intracellular proteins. Catalyzes the removal of unsubstituted N-terminal amino acids from various peptides. In Bacillus thuringiensis subsp. konkukian (strain 97-27), this protein is Probable cytosol aminopeptidase.